Consider the following 345-residue polypeptide: Chorismate synthase (345 aa).

This sequence belongs to the chorismate synthase family. Homotetramer. The cofactor is FMNH2.

It carries out the reaction 5-O-(1-carboxyvinyl)-3-phosphoshikimate = chorismate + phosphate. It participates in metabolic intermediate biosynthesis; chorismate biosynthesis; chorismate from D-erythrose 4-phosphate and phosphoenolpyruvate: step 7/7. This chain is Chorismate synthase (aroC), found in Carsonella ruddii (strain PV).